A 380-amino-acid chain; its full sequence is Serpin B7 (380 aa).

At S217 the chain carries Phosphoserine.

Belongs to the serpin family. Ov-serpin subfamily.

It is found in the cytoplasm. Might function as an inhibitor of Lys-specific proteases. Might influence the maturation of megakaryocytes via its action as a serpin. This chain is Serpin B7 (Serpinb7), found in Mus musculus (Mouse).